Consider the following 303-residue polypeptide: Protease HtpX homolog (303 aa).

Helical transmembrane passes span 19–39 (IIIF…VSYF) and 41–61 (LGEF…YYAY). Zn(2+) is bound at residue histidine 146. Glutamate 147 is an active-site residue. Histidine 150 serves as a coordination point for Zn(2+). 2 helical membrane passes run 156–176 (VRLQ…GDSL) and 192–212 (NILG…ATLL). Glutamate 221 is a binding site for Zn(2+).

The protein belongs to the peptidase M48B family. Zn(2+) serves as cofactor.

It localises to the cell inner membrane. This Dictyoglomus thermophilum (strain ATCC 35947 / DSM 3960 / H-6-12) protein is Protease HtpX homolog.